Consider the following 210-residue polypeptide: Guanylate kinase (210 aa).

Residues 23–203 (GRVVVLSGPS…ACAELVSLLV (181 aa)) enclose the Guanylate kinase-like domain. An ATP-binding site is contributed by 30–37 (GPSAVGKS).

The protein belongs to the guanylate kinase family.

The protein localises to the cytoplasm. The enzyme catalyses GMP + ATP = GDP + ADP. Essential for recycling GMP and indirectly, cGMP. The polypeptide is Guanylate kinase (gmk) (Mycobacterium leprae (strain TN)).